Consider the following 147-residue polypeptide: uncharacterized protein (147 aa).

This is an uncharacterized protein from Aedes vexans (Inland floodwater mosquito).